We begin with the raw amino-acid sequence, 356 residues long: tRNA N6-adenosine threonylcarbamoyltransferase (356 aa).

The Fe cation site is built by H115 and H119. Residues 138-142, D171, G184, and N283 each bind substrate; that span reads LVSGG. D311 contacts Fe cation.

This sequence belongs to the KAE1 / TsaD family. The cofactor is Fe(2+).

The protein localises to the cytoplasm. It catalyses the reaction L-threonylcarbamoyladenylate + adenosine(37) in tRNA = N(6)-L-threonylcarbamoyladenosine(37) in tRNA + AMP + H(+). Required for the formation of a threonylcarbamoyl group on adenosine at position 37 (t(6)A37) in tRNAs that read codons beginning with adenine. Is involved in the transfer of the threonylcarbamoyl moiety of threonylcarbamoyl-AMP (TC-AMP) to the N6 group of A37, together with TsaE and TsaB. TsaD likely plays a direct catalytic role in this reaction. The polypeptide is tRNA N6-adenosine threonylcarbamoyltransferase (Prochlorococcus marinus (strain MIT 9303)).